Reading from the N-terminus, the 257-residue chain is Snake venom serine protease KN9 (257 aa).

The signal sequence occupies residues 1-18 (MVLIRVLANLLILQLSYA). A propeptide spanning residues 19–24 (QKSSEL) is cleaved from the precursor. One can recognise a Peptidase S1 domain in the interval 25 to 248 (VVGGDECNIN…HLDWIKSIIA (224 aa)). Disulfide bonds link Cys31–Cys162, Cys49–Cys65, Cys141–Cys209, Cys173–Cys188, and Cys199–Cys224. Residue His64 is the Charge relay system of the active site. A glycan (N-linked (GlcNAc...) asparagine) is linked at Asn102. Asp109 acts as the Charge relay system in catalysis. Residues Asn120 and Asn121 are each glycosylated (N-linked (GlcNAc...) asparagine). Residue Ser203 is the Charge relay system of the active site.

This sequence belongs to the peptidase S1 family. Snake venom subfamily. Monomer. In terms of tissue distribution, expressed by the venom gland.

Its subcellular location is the secreted. Snake venom serine protease that may act in the hemostasis system of the prey. In Trimeresurus stejnegeri (Chinese green tree viper), this protein is Snake venom serine protease KN9.